The sequence spans 120 residues: UPF0102 protein NT01CX_2205 (120 aa).

It belongs to the UPF0102 family.

The protein is UPF0102 protein NT01CX_2205 of Clostridium novyi (strain NT).